Here is a 502-residue protein sequence, read N- to C-terminus: ATP synthase subunit alpha (502 aa).

The disordered stretch occupies residues 115–137 (VDGLGPVETTETRPIESPAPGVM). Residue 169-176 (GDRQTGKT) participates in ATP binding.

It belongs to the ATPase alpha/beta chains family. As to quaternary structure, F-type ATPases have 2 components, CF(1) - the catalytic core - and CF(0) - the membrane proton channel. CF(1) has five subunits: alpha(3), beta(3), gamma(1), delta(1), epsilon(1). CF(0) has three main subunits: a(1), b(2) and c(9-12). The alpha and beta chains form an alternating ring which encloses part of the gamma chain. CF(1) is attached to CF(0) by a central stalk formed by the gamma and epsilon chains, while a peripheral stalk is formed by the delta and b chains.

Its subcellular location is the cell membrane. It carries out the reaction ATP + H2O + 4 H(+)(in) = ADP + phosphate + 5 H(+)(out). Produces ATP from ADP in the presence of a proton gradient across the membrane. The alpha chain is a regulatory subunit. In Geobacillus kaustophilus (strain HTA426), this protein is ATP synthase subunit alpha.